A 285-amino-acid chain; its full sequence is Glutamate racemase (285 aa).

Residues 30-31 (DS) and 62-63 (YG) contribute to the substrate site. The Proton donor/acceptor role is filled by C94. Substrate is bound at residue 95-96 (NT). The active-site Proton donor/acceptor is C206. 207–208 (TH) provides a ligand contact to substrate.

The protein belongs to the aspartate/glutamate racemases family.

It carries out the reaction L-glutamate = D-glutamate. Its pathway is cell wall biogenesis; peptidoglycan biosynthesis. Its function is as follows. Provides the (R)-glutamate required for cell wall biosynthesis. The polypeptide is Glutamate racemase (Pectobacterium atrosepticum (strain SCRI 1043 / ATCC BAA-672) (Erwinia carotovora subsp. atroseptica)).